The primary structure comprises 1222 residues: Serine/threonine-protein kinase WNK4 (1222 aa).

Over residues 1 to 17 (MLAPRNTETGVPMSQTE) the composition is skewed to polar residues. The tract at residues 1-165 (MLAPRNTETG…DTETQAVATS (165 aa)) is disordered. The segment covering 90-101 (AGPTRSPPSSSK) has biased composition (low complexity). Residue Ser95 is modified to Phosphoserine. The span at 135–152 (EPPRVPDAAARERRREQE) shows a compositional bias: basic and acidic residues. Residues Lys154 and Lys172 each participate in a glycyl lysine isopeptide (Lys-Gly) (interchain with G-Cter in ubiquitin) cross-link. Residues 171–429 (LKFDIEIGRG…IQDLLAHAFF (259 aa)) enclose the Protein kinase domain. Ser181 serves as a coordination point for ATP. Residues Lys183, Lys223, and Lys238 each participate in a glycyl lysine isopeptide (Lys-Gly) (interchain with G-Cter in ubiquitin) cross-link. ATP contacts are provided by residues 251 to 254 (TELM) and Lys301. Asp318 acts as the Proton acceptor in catalysis. Lys325 is covalently cross-linked (Glycyl lysine isopeptide (Lys-Gly) (interchain with G-Cter in ubiquitin)). Phosphoserine; by autocatalysis is present on residues Ser328 and Ser332. Glycyl lysine isopeptide (Lys-Gly) (interchain with G-Cter in ubiquitin) cross-links involve residues Lys384, Lys390, Lys447, and Lys451. The interval 525-562 (RELEVLPPDSGPPPATVSLAPGPPSAFPPEPEEPEADQ) is disordered. Positions 533-553 (DSGPPPATVSLAPGPPSAFPP) are enriched in pro residues. The tract at residues 554–564 (EPEEPEADQHQ) is interaction with KLHL3. Ser572 carries the phosphoserine modification. Disordered regions lie at residues 626–659 (RSGP…MRKN), 747–809 (DAGP…GAPF), 877–896 (SYPQ…SPPS), and 927–976 (SPGL…AQPL). Low complexity-rich tracts occupy residues 627–638 (SGPGSDFSPGDS), 757–769 (ALSP…ALPA), 793–807 (STSP…SPGA), and 877–890 (SYPQ…SLPV). Residues 935-944 (PPAPPGPLPS) are compositionally biased toward pro residues. The span at 953–963 (DQESLSAQTAE) shows a compositional bias: polar residues. Lys990 is covalently cross-linked (Glycyl lysine isopeptide (Lys-Gly) (interchain with G-Cter in ubiquitin)). An RFXV motif motif is present at residues 996–999 (RFQV). The disordered stretch occupies residues 1000 to 1087 (TSSKEPAEPP…SSPILSHPSP (88 aa)). A Phosphoserine modification is found at Ser1014. The segment covering 1014–1032 (SPTLSRSLKLPSPPLTSES) has biased composition (low complexity). Residues 1044 to 1056 (ETREALAESDRAA) show a composition bias toward basic and acidic residues. Glycyl lysine isopeptide (Lys-Gly) (interchain with G-Cter in ubiquitin) cross-links involve residues Lys1123, Lys1136, and Lys1137. The interval 1166 to 1222 (RRLSKGSFPTSRRNSLQRSDLPGPGIMRRNSLSGSSTGSQEQRASKGVTFAGDIGRM) is disordered. Polar residues-rich tracts occupy residues 1172 to 1183 (SFPTSRRNSLQR) and 1195 to 1207 (NSLS…SQEQ). Residue Ser1196 is modified to Phosphoserine.

This sequence belongs to the protein kinase superfamily. Ser/Thr protein kinase family. WNK subfamily. Interacts with the C-terminal region of KCNJ1. Interacts with WNK1 and WNK3. Interacts with KLHL3. Mg(2+) is required as a cofactor. In terms of processing, autophosphorylated at Ser-328 and Ser-332, promoting its activation. Phosphorylated by WNK1 and WNK3. Phosphorylated at Ser-572 in a MAP3K15/ASK3-dependent process in response to osmotic stress or hypotonic low-chloride stimulation. Ubiquitinated by the BCR(KLHL3) complex, leading to its degradation. Also ubiquitinated by the BCR(KLHL2) complex. As to expression, locates to the distal convoluted tubule, the medullary collecting duct and the cortical collecting duct of the kidney. Expressed in pancreatic duct.

The protein localises to the cell junction. The protein resides in the tight junction. It carries out the reaction L-seryl-[protein] + ATP = O-phospho-L-seryl-[protein] + ADP + H(+). It catalyses the reaction L-threonyl-[protein] + ATP = O-phospho-L-threonyl-[protein] + ADP + H(+). With respect to regulation, activation requires autophosphorylation of Ser-328 and Ser-332. Autophosphorylation and subsequent activation is inhibited by increases in intracellular ionic strength: Cl(-) potently inhibits WNK4 kinase activity via direct binding. Also inhibited by K(+) ions. Serine/threonine-protein kinase component of the WNK4-SPAK/OSR1 kinase cascade, which acts as a key regulator of ion transport in the distal nephron and blood pressure. The WNK4-SPAK/OSR1 kinase cascade is composed of WNK4, which mediates phosphorylation and activation of downstream kinases OXSR1/OSR1 and STK39/SPAK. Following activation, OXSR1/OSR1 and STK39/SPAK catalyze phosphorylation of ion cotransporters, such as SLC12A1/NKCC2, SLC12A2/NKCC1, SLC12A3/NCC, SLC12A5/KCC2 or SLC12A6/KCC3, regulating their activity. Acts as a molecular switch that regulates the balance between renal salt reabsorption and K(+) secretion by modulating the activities of renal transporters and channels, including the Na-Cl cotransporter SLC12A3/NCC and the K(+) channel, KCNJ1/ROMK. Regulates NaCl reabsorption in the distal nephron by activating the thiazide-sensitive Na-Cl cotransporter SLC12A3/NCC in distal convoluted tubule cells of kidney: activates SLC12A3/NCC in a OXSR1/OSR1- and STK39/SPAK-dependent process. Also acts as a scaffold protein independently of its protein kinase activity: negatively regulates cell membrane localization of various transporters and channels (CFTR, KCNJ1/ROMK, SLC4A4, SLC26A9 and TRPV4) by clathrin-dependent endocytosis. Also inhibits the activity of the epithelial Na(+) channel (ENaC) SCNN1A, SCNN1B, SCNN1D in a inase-independent mechanism. May also phosphorylate NEDD4L. This Mus musculus (Mouse) protein is Serine/threonine-protein kinase WNK4.